The following is a 153-amino-acid chain: 3-hydroxyacyl-[acyl-carrier-protein] dehydratase FabZ (153 aa).

His54 is a catalytic residue.

It belongs to the thioester dehydratase family. FabZ subfamily.

It is found in the cytoplasm. It carries out the reaction a (3R)-hydroxyacyl-[ACP] = a (2E)-enoyl-[ACP] + H2O. In terms of biological role, involved in unsaturated fatty acids biosynthesis. Catalyzes the dehydration of short chain beta-hydroxyacyl-ACPs and long chain saturated and unsaturated beta-hydroxyacyl-ACPs. This is 3-hydroxyacyl-[acyl-carrier-protein] dehydratase FabZ from Shewanella sediminis (strain HAW-EB3).